A 366-amino-acid chain; its full sequence is Hydroxyproline O-arabinosyltransferase 1 (366 aa).

A helical; Signal-anchor transmembrane segment spans residues threonine 6–isoleucine 26.

Ubiquitous.

It is found in the golgi apparatus. The protein resides in the cis-Golgi network membrane. The catalysed reaction is trans-4-hydroxy-L-prolyl-[protein] + UDP-beta-L-arabinofuranose = O-(beta-L-arabinofuranosyl)-trans-4-hydroxy-L-prolyl-[protein] + UDP + H(+). Functionally, glycosyltransferase involved in the O-arabinosylation of several proteins including extensins and small signaling peptides. Catalyzes the transfer of the initial L-arabinose to the hydroxyl group of Hyp residues. Contributes redundantly with HPAT2 and HPAT3 to arabinosylation of EXT3. This is Hydroxyproline O-arabinosyltransferase 1 from Arabidopsis thaliana (Mouse-ear cress).